Consider the following 140-residue polypeptide: Midkine (140 aa).

A signal peptide spans 1-22 (MQHRGFFLLALLALLVVTSAVA). 5 disulfides stabilise this stretch: cysteine 34–cysteine 58, cysteine 42–cysteine 67, cysteine 49–cysteine 71, cysteine 81–cysteine 113, and cysteine 91–cysteine 123.

Belongs to the pleiotrophin family. As to quaternary structure, homodimer. Interacts with ALK. Interacts with LRP1; promotes neuronal survival. Interacts with LRP2. Interacts with NCAM1. Interacts (via C-terminal) with PTPRZ1 (via chondroitin sulfate chains); this interaction is inhibited by PTN; this interaction promotes neuronal migration. Interacts with NCL; this interaction promotes NCL clustering and lateral movements of this complex into lipid rafts leading to MDK internalization. Interacts with LRP6 and LRP8: this interaction is calcium dependent. Interacts with ITGA4. Interacts with ITGA6. Interacts with ITGB1. Interacts with ITGA4:ITGB1 complex; this interaction mediates MDK-induced osteoblast cells migration through PXN phosphorylation. Interacts with ITGA6:ITGB1 complex; this interaction mediates MDK-induced neurite outgrowth. Interacts with NOTCH2; this interactio mediates a nuclear accumulation of NOTCH2 and therefore activation of NOTCH2 signaling leading to interaction between HES1 and STAT3. Interacts with GPC2 (via heparan sulfate chain); this interaction is inhibited by heparin followed by chondroitin sulfate E; this interaction induces GPC2 clustering through heparan sulfate chain; this interaction induces neuronal cell adhesion and neurite outgrowth. Interacts with SDC3; this interaction induces SDC3 clustering; this interaction induces neuronal cell adhesion and neurite outgrowth. Interacts with SDC1. Interacts with CSPG5; this interaction promotes elongation of oligodendroglial precursor-like cells. In terms of tissue distribution, expressed in the follicular epithelium and granulosa cells of the ovary.

It is found in the secreted. Its function is as follows. Secreted protein that functions as a cytokine and growth factor and mediates its signal through cell-surface proteoglycan and non-proteoglycan receptors. Binds cell-surface proteoglycan receptors via their chondroitin sulfate (CS) groups. Thereby regulates many processes like inflammatory response, cell proliferation, cell adhesion, cell growth, cell survival, tissue regeneration, cell differentiation and cell migration. Participates in inflammatory processes by exerting two different activities. Firstly, mediates neutrophils and macrophages recruitment to the sites of inflammation both by direct action by cooperating namely with ITGB2 via LRP1 and by inducing chemokine expression. This inflammation can be accompanied by epithelial cell survival and smooth muscle cell migration after renal and vessel damage, respectively. Secondly, suppresses the development of tolerogenic dendric cells thereby inhibiting the differentiation of regulatory T cells and also promote T cell expansion through NFAT signaling and Th1 cell differentiation. Promotes tissue regeneration after injury or trauma. After heart damage negatively regulates the recruitment of inflammatory cells and mediates cell survival through activation of anti-apoptotic signaling pathways via MAPKs and AKT pathways through the activation of angiogenesis. Also facilitates liver regeneration as well as bone repair by recruiting macrophage at trauma site and by promoting cartilage development by facilitating chondrocyte differentiation. Plays a role in brain by promoting neural precursor cells survival and growth through interaction with heparan sulfate proteoglycans. Binds PTPRZ1 and promotes neuronal migration and embryonic neurons survival. Binds SDC3 or GPC2 and mediates neurite outgrowth and cell adhesion. Binds chondroitin sulfate E and heparin leading to inhibition of neuronal cell adhesion induced by binding with GPC2. Binds CSPG5 and promotes elongation of oligodendroglial precursor-like cells. Also binds ITGA6:ITGB1 complex; this interaction mediates MDK-induced neurite outgrowth. Binds LRP1; promotes neuronal survival. Binds ITGA4:ITGB1 complex; this interaction mediates MDK-induced osteoblast cells migration through PXN phosphorylation. Binds anaplastic lymphoma kinase (ALK) which induces ALK activation and subsequent phosphorylation of the insulin receptor substrate (IRS1), followed by the activation of mitogen-activated protein kinase (MAPK) and PI3-kinase, and the induction of cell proliferation. Promotes epithelial to mesenchymal transition through interaction with NOTCH2. During arteriogenesis, plays a role in vascular endothelial cell proliferation by inducing VEGFA expression and release which in turn induces nitric oxide synthase expression. Moreover activates vasodilation through nitric oxide synthase activation. Negatively regulates bone formation in response to mechanical load by inhibiting Wnt/beta-catenin signaling in osteoblasts. In addition plays a role in hippocampal development, working memory, auditory response, early fetal adrenal gland development and the female reproductive system. This Mus musculus (Mouse) protein is Midkine.